The primary structure comprises 130 residues: MPKTVVIPPGTGKPLAPYVPGTLADGVLYVSGTLPLDAEANVVHEGDAGAQTRHVLETIKGVVEAAGGSMDDVTFNHIFLKDWADYGAINAVYATYFPGEKPARYCIQCGLVKPTALVEIASVAHIGKPA.

It belongs to the RutC family.

The catalysed reaction is (Z)-3-aminoacrylate + H2O + H(+) = 3-oxopropanoate + NH4(+). Functionally, involved in pyrimidine catabolism. Catalyzes the deamination of 3-aminoacrylate to malonic semialdehyde, a reaction that can also occur spontaneously. RutC may facilitate the reaction and modulate the metabolic fitness, rather than catalyzing essential functions. The chain is 3-aminoacrylate deaminase RutC from Methylorubrum extorquens (strain CM4 / NCIMB 13688) (Methylobacterium extorquens).